The sequence spans 418 residues: 3-phosphoshikimate 1-carboxyvinyltransferase (418 aa).

Residues Lys26, Ser27, and Arg31 each contribute to the 3-phosphoshikimate site. Lys26 contributes to the phosphoenolpyruvate binding site. 2 residues coordinate phosphoenolpyruvate: Gly97 and Arg125. 3-phosphoshikimate is bound by residues Ser170, Ser171, Gln172, Asp297, Asn320, and Lys324. Residue Gln172 participates in phosphoenolpyruvate binding. The active-site Proton acceptor is Asp297. 3 residues coordinate phosphoenolpyruvate: Arg328, Arg375, and Lys400.

This sequence belongs to the EPSP synthase family. As to quaternary structure, monomer.

The protein localises to the cytoplasm. The catalysed reaction is 3-phosphoshikimate + phosphoenolpyruvate = 5-O-(1-carboxyvinyl)-3-phosphoshikimate + phosphate. It functions in the pathway metabolic intermediate biosynthesis; chorismate biosynthesis; chorismate from D-erythrose 4-phosphate and phosphoenolpyruvate: step 6/7. In terms of biological role, catalyzes the transfer of the enolpyruvyl moiety of phosphoenolpyruvate (PEP) to the 5-hydroxyl of shikimate-3-phosphate (S3P) to produce enolpyruvyl shikimate-3-phosphate and inorganic phosphate. This chain is 3-phosphoshikimate 1-carboxyvinyltransferase, found in Pseudomonas syringae pv. syringae (strain B728a).